The sequence spans 293 residues: Probable porphobilinogen deaminase (293 aa).

Cys-233 is subject to S-(dipyrrolylmethanemethyl)cysteine.

Belongs to the HMBS family. Requires dipyrromethane as cofactor.

It catalyses the reaction 4 porphobilinogen + H2O = hydroxymethylbilane + 4 NH4(+). It functions in the pathway porphyrin-containing compound metabolism; protoporphyrin-IX biosynthesis; coproporphyrinogen-III from 5-aminolevulinate: step 2/4. In terms of biological role, tetrapolymerization of the monopyrrole PBG into the hydroxymethylbilane pre-uroporphyrinogen in several discrete steps. The chain is Probable porphobilinogen deaminase from Saccharolobus islandicus (strain Y.G.57.14 / Yellowstone #1) (Sulfolobus islandicus).